Consider the following 423-residue polypeptide: Serine--tRNA ligase (423 aa).

229 to 231 (TAE) is a binding site for L-serine. 260-262 (RKE) is a binding site for ATP. Residue glutamate 283 participates in L-serine binding. Residue 347–350 (EVSS) coordinates ATP. An L-serine-binding site is contributed by serine 383.

Belongs to the class-II aminoacyl-tRNA synthetase family. Type-1 seryl-tRNA synthetase subfamily. Homodimer. The tRNA molecule binds across the dimer.

The protein localises to the cytoplasm. The catalysed reaction is tRNA(Ser) + L-serine + ATP = L-seryl-tRNA(Ser) + AMP + diphosphate + H(+). It carries out the reaction tRNA(Sec) + L-serine + ATP = L-seryl-tRNA(Sec) + AMP + diphosphate + H(+). It participates in aminoacyl-tRNA biosynthesis; selenocysteinyl-tRNA(Sec) biosynthesis; L-seryl-tRNA(Sec) from L-serine and tRNA(Sec): step 1/1. In terms of biological role, catalyzes the attachment of serine to tRNA(Ser). Is also able to aminoacylate tRNA(Sec) with serine, to form the misacylated tRNA L-seryl-tRNA(Sec), which will be further converted into selenocysteinyl-tRNA(Sec). The protein is Serine--tRNA ligase of Chloroflexus aurantiacus (strain ATCC 29366 / DSM 635 / J-10-fl).